Consider the following 137-residue polypeptide: Fatty acid-binding protein homolog 7 (137 aa).

The protein belongs to the calycin superfamily. Fatty-acid binding protein (FABP) family.

The sequence is that of Fatty acid-binding protein homolog 7 (lbp-7) from Caenorhabditis elegans.